The following is a 101-amino-acid chain: Interleukin-8 (101 aa).

Residues 1 to 22 form the signal peptide; the sequence is MPSQLRVAVLAAFLLSAVLCEG. Cystine bridges form between Cys34–Cys61 and Cys36–Cys77.

Belongs to the intercrine alpha (chemokine CxC) family. As to quaternary structure, homodimer. Interacts with TNFAIP6 (via Link domain); this interaction interferes with chemokine binding to glycosaminoglycans.

It localises to the secreted. Chemotactic factor that mediates inflammatory response by attracting neutrophils, basophils, and T-cells to clear pathogens and protect the host from infection. Also plays an important role in neutrophil activation. Released in response to an inflammatory stimulus, exerts its effect by binding to the G-protein-coupled receptors CXCR1 and CXCR2, primarily found in neutrophils, monocytes and endothelial cells. G-protein heterotrimer (alpha, beta, gamma subunits) constitutively binds to CXCR1/CXCR2 receptor and activation by IL8 leads to beta and gamma subunits release from Galpha (GNAI2 in neutrophils) and activation of several downstream signaling pathways including PI3K and MAPK pathways. The chain is Interleukin-8 (CXCL8) from Cavia porcellus (Guinea pig).